We begin with the raw amino-acid sequence, 121 residues long: Small ribosomal subunit protein uS13 (121 aa).

A disordered region spans residues 89-121 (MRHRRGLPVRGQHTKNNARTRKGKAVSIAGKKK).

It belongs to the universal ribosomal protein uS13 family. In terms of assembly, part of the 30S ribosomal subunit. Forms a loose heterodimer with protein S19. Forms two bridges to the 50S subunit in the 70S ribosome.

Located at the top of the head of the 30S subunit, it contacts several helices of the 16S rRNA. In the 70S ribosome it contacts the 23S rRNA (bridge B1a) and protein L5 of the 50S subunit (bridge B1b), connecting the 2 subunits; these bridges are implicated in subunit movement. Contacts the tRNAs in the A and P-sites. In Levilactobacillus brevis (strain ATCC 367 / BCRC 12310 / CIP 105137 / JCM 1170 / LMG 11437 / NCIMB 947 / NCTC 947) (Lactobacillus brevis), this protein is Small ribosomal subunit protein uS13.